We begin with the raw amino-acid sequence, 341 residues long: HTH-type transcriptional repressor PurR (341 aa).

Residues 2-56 enclose the HTH lacI-type domain; it reads ATIKDVAKRAGVSTTTVSHVINKTRFVAENTRAAVWAAIKELNYSPSAVARSLKV. The segment at residues 4–23 is a DNA-binding region (H-T-H motif); sequence IKDVAKRAGVSTTTVSHVIN. The DNA-binding element occupies 48 to 56; the sequence is SAVARSLKV. Positions 73, 190, 192, 221, and 275 each coordinate hypoxanthine.

In terms of assembly, homodimer.

Its pathway is purine metabolism; purine nucleotide biosynthesis [regulation]. Functionally, is the main repressor of the genes involved in the de novo synthesis of purine nucleotides, regulating purB, purC, purEK, purF, purHD, purL, purMN and guaBA expression. PurR is allosterically activated to bind its cognate DNA by binding the purine corepressors, hypoxanthine or guanine, thereby effecting transcription repression. This is HTH-type transcriptional repressor PurR from Proteus mirabilis (strain HI4320).